The following is a 142-amino-acid chain: 5-hydroxymethyl-dUMP N-hydrolase (142 aa).

Residues Gly-7, Ile-9, Arg-10, Gly-11, Ser-78, Gly-80, Glu-84, and Ser-108 each coordinate 5-hydroxymethyl-dUMP.

This sequence belongs to the 2'-deoxynucleoside 5'-phosphate N-hydrolase 1 family. In terms of assembly, monomer and homodimer.

It localises to the cytoplasm. The protein localises to the nucleus. The catalysed reaction is 5-hydroxymethyl-dUMP + H2O = 5-hydroxymethyluracil + 2-deoxy-D-ribose 5-phosphate. Its function is as follows. Part of a nucleotide salvage pathway that eliminates epigenetically modified 5-hydroxymethyl-dCMP (hmdCMP) in a two-step process entailing deamination to cytotoxic 5-hydroxymethyl-dUMP (hmdUMP), followed by its hydrolysis into 5-hydroxymethyluracil (hmU) and 2-deoxy-D-ribose 5-phosphate (deoxyribosephosphate). Catalyzes the second step in that pathway, the hydrolysis of the N-glycosidic bond in hmdUMP, degrading this cytotoxic nucleotide to avoid its genomic integration. This chain is 5-hydroxymethyl-dUMP N-hydrolase (dnph1), found in Tetraodon nigroviridis (Spotted green pufferfish).